Consider the following 442-residue polypeptide: UBX domain-containing protein 6 (442 aa).

The segment at 1–10 is mediates interaction with LMAN1; that stretch reads MKKFFQEIKA. The disordered stretch occupies residues 13–111; it reads KFKSAGPGQK…TNSVPEPKEE (99 aa). Ser36 is subject to Phosphoserine. Positions 51–63 are VCP/p97-interacting motif (VIM); the sequence is EAQMAAAAALARL. The segment covering 52–61 has biased composition (low complexity); the sequence is AQMAAAAALA. Over residues 90–105 the composition is skewed to polar residues; sequence EATSSNNPGAPGTNSV. Residues 175 to 244 form the PUB domain; that stretch reads VDTIAKYLDN…GQEEFYVLGE (70 aa). Residues 332–408 form the UBX domain; that stretch reads RKYTYALVRV…GLVPSALLTF (77 aa).

Interacts with VCP through the PUB domain (via C-terminus) and VIM motif (via N-terminus); the interaction is direct. Forms a ternary complex with CAV1 and VCP. Interacts with SYVN1. Interacts with HERPUD1. Interacts with VCPKMT. May interact with DERL1. Interacts with PLAA, VCP and YOD1; may form a complex involved in macroautophagy. Interacts with LMAN1. As to expression, widely expressed (at protein level). Highest expression in brain (at protein level).

The protein resides in the cytoplasm. It is found in the cytosol. The protein localises to the membrane. It localises to the nucleus. Its subcellular location is the cytoskeleton. The protein resides in the microtubule organizing center. It is found in the centrosome. The protein localises to the early endosome membrane. It localises to the late endosome membrane. Its subcellular location is the lysosome membrane. In terms of biological role, may negatively regulate the ATPase activity of VCP, an ATP-driven segregase that associates with different cofactors to control a wide variety of cellular processes. As a cofactor of VCP, it may play a role in the transport of CAV1 to lysosomes for degradation. It may also play a role in endoplasmic reticulum-associated degradation (ERAD) of misfolded proteins. Together with VCP and other cofactors, it may play a role in macroautophagy, regulating for instance the clearance of damaged lysosomes. The sequence is that of UBX domain-containing protein 6 from Mus musculus (Mouse).